We begin with the raw amino-acid sequence, 74 residues long: Mitochondrial import receptor subunit TOM6 homolog (74 aa).

Residues 1 to 14 (MASSGAGVTAAGSA) show a composition bias toward low complexity. A disordered region spans residues 1-24 (MASSGAGVTAAGSANEAPEIPDNV). The residue at position 2 (alanine 2) is an N-acetylalanine.

It belongs to the Tom6 family. Forms part of the preprotein translocase complex of the outer mitochondrial membrane (TOM complex) which consists of at least 7 different proteins (TOMM5, TOMM6, TOMM7, TOMM20, TOMM22, TOMM40 and TOMM70).

It localises to the mitochondrion outer membrane. In Bos taurus (Bovine), this protein is Mitochondrial import receptor subunit TOM6 homolog (TOMM6).